The primary structure comprises 255 residues: Myogenic factor 5 (255 aa).

In terms of domain architecture, bHLH spans 83 to 134 (DRRKAATMRERRRLKKVNQAFDTLKRCTTTNPNQRLPKVEILRNAIRYIESL). Residues 217–249 (SEQPGLPLQDPASLSPVASTDSQPATPGASSSR) form a disordered region. The span at 232-249 (PVASTDSQPATPGASSSR) shows a compositional bias: polar residues.

Efficient DNA binding requires dimerization with another bHLH protein.

The protein localises to the nucleus. Its function is as follows. Acts as a transcriptional activator that promotes transcription of muscle-specific target genes and plays a role in muscle differentiation. Together with MYOG and MYOD1, co-occupies muscle-specific gene promoter core region during myogenesis. Induces fibroblasts to differentiate into myoblasts. Probable sequence specific DNA-binding protein. The sequence is that of Myogenic factor 5 (MYF5) from Bos taurus (Bovine).